A 288-amino-acid polypeptide reads, in one-letter code: MNSKKHLGHTARKRFGQNFLHDNNVIHGIVSAIYPQKDQFLVEIGPGLGALTEPVGELVDHLTVVELDRDLAERLRHHPFLHHKITVIETDAMQFDFGQLYRDANLAEKKQKMRVFGNLPYNISTPLMFHLFKYHDCIQDMHFMLQKEVVKRLCAGPNSKAYGRLTIMAQYFCQVMPVLEVPPTAFKPAPKVDSAVVRLVPHKVLPHPVKDLYWLNRVCSQAFNQRRKTLRNALSTLFSADQLTELGIDLTARAENLSIADYARLANWLTDNPPADVNKDEMIEHLDD.

Positions 18, 20, 45, 66, 91, and 118 each coordinate S-adenosyl-L-methionine.

This sequence belongs to the class I-like SAM-binding methyltransferase superfamily. rRNA adenine N(6)-methyltransferase family. RsmA subfamily.

The protein localises to the cytoplasm. It catalyses the reaction adenosine(1518)/adenosine(1519) in 16S rRNA + 4 S-adenosyl-L-methionine = N(6)-dimethyladenosine(1518)/N(6)-dimethyladenosine(1519) in 16S rRNA + 4 S-adenosyl-L-homocysteine + 4 H(+). Functionally, specifically dimethylates two adjacent adenosines (A1518 and A1519) in the loop of a conserved hairpin near the 3'-end of 16S rRNA in the 30S particle. May play a critical role in biogenesis of 30S subunits. This is Ribosomal RNA small subunit methyltransferase A from Pasteurella multocida (strain Pm70).